The following is a 791-amino-acid chain: Putative inactive tyrosine-protein kinase Wsck (791 aa).

Residues Met-1–Gly-26 form the signal peptide. Residues Leu-27–Ser-401 are Extracellular-facing. One can recognise a WSC domain in the interval Ala-39 to Ile-125. The 116-residue stretch at Gly-131–Gly-246 folds into the Fibronectin type-III domain. N-linked (GlcNAc...) asparagine glycosylation is found at Asn-139, Asn-217, and Asn-329. Residues Val-402–Ala-422 form a helical membrane-spanning segment. Residues Tyr-423–Gly-791 lie on the Cytoplasmic side of the membrane. One can recognise a Protein kinase domain in the interval Leu-493–Met-758. An ATP-binding site is contributed by Ile-499 to Ile-507.

The protein belongs to the protein kinase superfamily. Tyr protein kinase family.

The protein localises to the membrane. Its function is as follows. Probably lacks tyrosine-protein kinase activity. The protein is Putative inactive tyrosine-protein kinase Wsck of Drosophila melanogaster (Fruit fly).